The primary structure comprises 239 residues: DNA repair protein RecO (239 aa).

It belongs to the RecO family.

Its function is as follows. Involved in DNA repair and RecF pathway recombination. The protein is DNA repair protein RecO of Tolumonas auensis (strain DSM 9187 / NBRC 110442 / TA 4).